Here is a 67-residue protein sequence, read N- to C-terminus: Copper transport protein ATOX1 homolog (67 aa).

Residues 1–64 (MTYSFFVDMT…NIQKTGKKCS (64 aa)) enclose the HMA domain. The Cu cation site is built by cysteine 11 and cysteine 14.

It belongs to the ATX1 family.

Its function is as follows. Could bind and deliver cytosolic copper to the copper ATPase proteins. May be important in cellular antioxidant defense. The sequence is that of Copper transport protein ATOX1 homolog (atox1) from Dictyostelium discoideum (Social amoeba).